Here is a 119-residue protein sequence, read N- to C-terminus: NADH-quinone oxidoreductase subunit A (119 aa).

Transmembrane regions (helical) follow at residues 7–27 (YPVLLFLLVGTGLGIALVSIG), 63–83 (LVAILFIIFDLETAFLFPWGV), and 88–108 (IGWPGFSAMMIFLLEFLLGFA).

Belongs to the complex I subunit 3 family. As to quaternary structure, NDH-1 is composed of 14 different subunits. Subunits NuoA, H, J, K, L, M, N constitute the membrane sector of the complex.

The protein localises to the cell inner membrane. The enzyme catalyses a quinone + NADH + 5 H(+)(in) = a quinol + NAD(+) + 4 H(+)(out). Its function is as follows. NDH-1 shuttles electrons from NADH, via FMN and iron-sulfur (Fe-S) centers, to quinones in the respiratory chain. The immediate electron acceptor for the enzyme in this species is believed to be ubiquinone. Couples the redox reaction to proton translocation (for every two electrons transferred, four hydrogen ions are translocated across the cytoplasmic membrane), and thus conserves the redox energy in a proton gradient. This chain is NADH-quinone oxidoreductase subunit A, found in Burkholderia vietnamiensis (strain G4 / LMG 22486) (Burkholderia cepacia (strain R1808)).